A 304-amino-acid polypeptide reads, in one-letter code: Glycine--tRNA ligase alpha subunit (304 aa).

The protein belongs to the class-II aminoacyl-tRNA synthetase family. In terms of assembly, tetramer of two alpha and two beta subunits.

It is found in the cytoplasm. It catalyses the reaction tRNA(Gly) + glycine + ATP = glycyl-tRNA(Gly) + AMP + diphosphate. The sequence is that of Glycine--tRNA ligase alpha subunit from Vibrio atlanticus (strain LGP32) (Vibrio splendidus (strain Mel32)).